The following is a 201-amino-acid chain: Protein S40-5 (201 aa).

2 disordered regions span residues 1 to 39 and 134 to 178; these read MARG…LTEE and SIHE…EGVG. Residues 17-29 show a composition bias toward low complexity; sequence GSSYSYGDSNGNS.

This sequence belongs to the senescence regulator S40 family.

The protein resides in the cytoplasm. This is Protein S40-5 from Arabidopsis thaliana (Mouse-ear cress).